The following is a 101-amino-acid chain: NADH-quinone oxidoreductase subunit K (101 aa).

3 helical membrane-spanning segments follow: residues 4–24, 30–50, and 65–85; these read LEHY…GLFL, IVLL…LVAF, and FVLT…VCFF.

The protein belongs to the complex I subunit 4L family. As to quaternary structure, NDH-1 is composed of 14 different subunits. Subunits NuoA, H, J, K, L, M, N constitute the membrane sector of the complex.

Its subcellular location is the cell inner membrane. The enzyme catalyses a quinone + NADH + 5 H(+)(in) = a quinol + NAD(+) + 4 H(+)(out). NDH-1 shuttles electrons from NADH, via FMN and iron-sulfur (Fe-S) centers, to quinones in the respiratory chain. The immediate electron acceptor for the enzyme in this species is believed to be ubiquinone. Couples the redox reaction to proton translocation (for every two electrons transferred, four hydrogen ions are translocated across the cytoplasmic membrane), and thus conserves the redox energy in a proton gradient. This chain is NADH-quinone oxidoreductase subunit K, found in Ruegeria pomeroyi (strain ATCC 700808 / DSM 15171 / DSS-3) (Silicibacter pomeroyi).